The following is a 740-amino-acid chain: ATP-dependent zinc metalloprotease YME1L (740 aa).

The Mitochondrial matrix portion of the chain corresponds to 1–256; it reads MFSTTTHSVP…KSGKTMKYLK (256 aa). Residues 257 to 277 traverse the membrane as a helical segment; it reads TLQTIVVIVVFLGIFLSFFTT. At 278–740 the chain is on the mitochondrial intermembrane side; it reads SNGSVFRSIQ…IKAILNESQT (463 aa). ATP is bound at residue 347-351; it reads GTGKT. His563 contributes to the Zn(2+) binding site. The active site involves Glu564. Residues His567 and Asp641 each coordinate Zn(2+).

The protein in the N-terminal section; belongs to the AAA ATPase family. In the C-terminal section; belongs to the peptidase M41 family. The cofactor is Zn(2+).

The protein localises to the mitochondrion inner membrane. Functionally, ATP-dependent metalloprotease that catalyzes the degradation of folded and unfolded proteins with a suitable degron sequence in the mitochondrial intermembrane region. Plays an important role in regulating mitochondrial morphology and function by cleaving Opa1, giving rise to a form of Opa1 that promotes maintenance of normal mitochondrial structure and mitochondrial protein metabolism. Ensures cell proliferation, maintains normal cristae morphology and complex I respiration activity, promotes antiapoptotic activity and protects mitochondria from the accumulation of oxidatively damaged membrane proteins. Required to control the accumulation of nonassembled respiratory chain subunits such as ND-30. This Drosophila melanogaster (Fruit fly) protein is ATP-dependent zinc metalloprotease YME1L.